A 163-amino-acid chain; its full sequence is NADH-quinone oxidoreductase subunit I (163 aa).

4Fe-4S ferredoxin-type domains lie at 53 to 83 (LRRY…IEAG) and 94 to 123 (VRYD…EGPN). The [4Fe-4S] cluster site is built by Cys63, Cys66, Cys69, Cys73, Cys103, Cys106, Cys109, and Cys113.

Belongs to the complex I 23 kDa subunit family. NDH-1 is composed of 14 different subunits. Subunits NuoA, H, J, K, L, M, N constitute the membrane sector of the complex. [4Fe-4S] cluster is required as a cofactor.

It localises to the cell inner membrane. It catalyses the reaction a quinone + NADH + 5 H(+)(in) = a quinol + NAD(+) + 4 H(+)(out). Its function is as follows. NDH-1 shuttles electrons from NADH, via FMN and iron-sulfur (Fe-S) centers, to quinones in the respiratory chain. The immediate electron acceptor for the enzyme in this species is believed to be ubiquinone. Couples the redox reaction to proton translocation (for every two electrons transferred, four hydrogen ions are translocated across the cytoplasmic membrane), and thus conserves the redox energy in a proton gradient. This is NADH-quinone oxidoreductase subunit I from Bartonella tribocorum (strain CIP 105476 / IBS 506).